A 420-amino-acid polypeptide reads, in one-letter code: Tubulin epsilon and delta complex protein 1 (420 aa).

Residues 276-340 are a coiled coil; sequence SEGGLGELES…AVQQELAALQ (65 aa). Polar residues predominate over residues 342–351; that stretch reads SWEQSSTPGQ. Residues 342–369 form a disordered region; it reads SWEQSSTPGQPQRPHRLVRSKDGAPRPQ. The stretch at 377–409 forms a coiled coil; it reads IRTLSAKEACLKKALHQLQRQCQQELARLAGAL.

In terms of assembly, interacts with TEDC2. Found in a complex with TEDC1, TEDC2, TUBE1 and TUBD1.

The protein localises to the cell projection. It localises to the cilium. The protein resides in the cytoplasm. Its subcellular location is the cytoskeleton. It is found in the microtubule organizing center. The protein localises to the centrosome. It localises to the centriole. Acts as a positive regulator of ciliary hedgehog signaling. Required for centriole stability. May play a role in counteracting perturbation of actin filaments, such as after treatment with the actin depolymerizing microbial metabolite Chivosazole F. In Mus musculus (Mouse), this protein is Tubulin epsilon and delta complex protein 1.